A 220-amino-acid chain; its full sequence is RPA-interacting protein B (220 aa).

An interaction with importin beta region spans residues 1–45 (MEAERRHRALYKGTTPPWKETYRKRCVERLKSNRSKLLDKFRQVG). An interaction with RPA1 region spans residues 49–165 (HGGVGGSFLV…QCGVYINTQS (117 aa)). An RIP-type zinc finger spans residues 138–213 (CPVCNRNYLT…ASLFMSCQEC (76 aa)).

As to quaternary structure, interacts directly with the RPA1 subunit of RPA complex. Interacts with importin beta, but not with importin alpha. Forms a complex with the RPA complex and importin beta, which is dissociated by Ran-GTP.

It is found in the nucleus. In terms of biological role, mediates the import of RPA complex into the nucleus, via its interaction with importin beta. The protein is RPA-interacting protein B (rpain-b) of Xenopus laevis (African clawed frog).